The primary structure comprises 511 residues: Cobyric acid synthase (511 aa).

In terms of domain architecture, GATase cobBQ-type spans 251 to 443 (LLDIAIICLP…IHGIFDNDIF (193 aa)). Catalysis depends on cysteine 332, which acts as the Nucleophile. Histidine 435 is a catalytic residue.

The protein belongs to the CobB/CobQ family. CobQ subfamily.

Its pathway is cofactor biosynthesis; adenosylcobalamin biosynthesis. In terms of biological role, catalyzes amidations at positions B, D, E, and G on adenosylcobyrinic A,C-diamide. NH(2) groups are provided by glutamine, and one molecule of ATP is hydrogenolyzed for each amidation. This is Cobyric acid synthase from Listeria welshimeri serovar 6b (strain ATCC 35897 / DSM 20650 / CCUG 15529 / CIP 8149 / NCTC 11857 / SLCC 5334 / V8).